The chain runs to 122 residues: Large ribosomal subunit protein uL14 (122 aa).

Belongs to the universal ribosomal protein uL14 family. Part of the 50S ribosomal subunit. Forms a cluster with proteins L3 and L19. In the 70S ribosome, L14 and L19 interact and together make contacts with the 16S rRNA in bridges B5 and B8.

Its function is as follows. Binds to 23S rRNA. Forms part of two intersubunit bridges in the 70S ribosome. The chain is Large ribosomal subunit protein uL14 from Nitrosospira multiformis (strain ATCC 25196 / NCIMB 11849 / C 71).